Consider the following 164-residue polypeptide: Phosphopantetheine adenylyltransferase (164 aa).

Position 10 (S10) interacts with substrate. ATP-binding positions include 10–11 (SF) and H18. 3 residues coordinate substrate: K42, M74, and R88. ATP is bound by residues 89 to 91 (GLR), E99, and 124 to 130 (YFFVSAR).

Belongs to the bacterial CoaD family. In terms of assembly, homohexamer. The cofactor is Mg(2+).

The protein resides in the cytoplasm. It catalyses the reaction (R)-4'-phosphopantetheine + ATP + H(+) = 3'-dephospho-CoA + diphosphate. It functions in the pathway cofactor biosynthesis; coenzyme A biosynthesis; CoA from (R)-pantothenate: step 4/5. Its function is as follows. Reversibly transfers an adenylyl group from ATP to 4'-phosphopantetheine, yielding dephospho-CoA (dPCoA) and pyrophosphate. The chain is Phosphopantetheine adenylyltransferase from Anaeromyxobacter dehalogenans (strain 2CP-1 / ATCC BAA-258).